Consider the following 199-residue polypeptide: Protein Thf1 (199 aa).

Positions 167–198 (QYSRVEKDISMYKSNIEKMKQALEIIALNLKT) form a coiled coil.

It belongs to the THF1 family.

In terms of biological role, may be involved in photosynthetic membrane biogenesis. The chain is Protein Thf1 from Prochlorococcus marinus (strain NATL1A).